The sequence spans 260 residues: Fructose import ATP-binding protein FrcA (260 aa).

In terms of domain architecture, ABC transporter spans 7–251; it reads LTARGLVKRY…DAVAFMTGAK (245 aa). 39–46 lines the ATP pocket; it reads GDNGAGKS.

The protein belongs to the ABC transporter superfamily. As to quaternary structure, the complex is composed of two ATP-binding proteins (FrcA), two transmembrane proteins (FrcC) and a solute-binding protein (FrcB).

The protein localises to the cell inner membrane. It carries out the reaction D-fructose(out) + ATP + H2O = D-fructose(in) + ADP + phosphate + H(+). Part of the high-affinity ABC transporter complex FrcBCA involved in fructose uptake. Is also a high-affinity transporter for ribose and mannose. Responsible for energy coupling to the transport system. This is Fructose import ATP-binding protein FrcA from Rhizobium meliloti (Ensifer meliloti).